A 287-amino-acid chain; its full sequence is MLLLWALLALGCLRCGWTVNLQPQLASVTFATNNPTLTTVALEKPLCMFDSSEPLSGSYEVYLYAMVDSAMSRNVSVQDSAGVPLSTTFRQTQGGRSGPYKAAAFDLTPCGDLPSLDAVGDVTQASEILNAYLVRVGNNGTCFWDPNFQGLCNPPLTAATEYRFKYVLVNMSTGLVQDQTLWSDPIWTNRPIPYSAIDTWPGRRSGGMIVITSILGSLPFFLLVGFAGAIILSFVDMGSSDGEMTHDSQITQEAVPKTLGTSEPSYSSVNRGPPLDRAEVFSSKLQD.

Positions 1–18 (MLLLWALLALGCLRCGWT) are cleaved as a signal peptide. Residues 19 to 207 (VNLQPQLASV…DTWPGRRSGG (189 aa)) lie on the Lumenal side of the membrane. Asparagine 74, asparagine 139, and asparagine 170 each carry an N-linked (GlcNAc...) asparagine glycan. A helical membrane pass occupies residues 208–235 (MIVITSILGSLPFFLLVGFAGAIILSFV). The Cytoplasmic portion of the chain corresponds to 236–287 (DMGSSDGEMTHDSQITQEAVPKTLGTSEPSYSSVNRGPPLDRAEVFSSKLQD). The disordered stretch occupies residues 243–287 (EMTHDSQITQEAVPKTLGTSEPSYSSVNRGPPLDRAEVFSSKLQD). Residues 259-270 (LGTSEPSYSSVN) show a composition bias toward polar residues.

The protein belongs to the uroplakin-3 family. In terms of assembly, heterodimer with uroplakin-1B (UPK1B).

It localises to the endoplasmic reticulum membrane. Component of the asymmetric unit membrane (AUM); a highly specialized biomembrane elaborated by terminally differentiated urothelial cells. May play an important role in AUM-cytoskeleton interaction in terminally differentiated urothelial cells. It also contributes to the formation of urothelial glycocalyx which may play an important role in preventing bacterial adherence. In Mus musculus (Mouse), this protein is Uroplakin-3a (Upk3a).